Reading from the N-terminus, the 151-residue chain is Probable transcriptional regulator syrB3 (151 aa).

The disordered stretch occupies residues 1-65; the sequence is MVDESNAGPV…QERSEKLRLI (65 aa). The segment covering 7–23 has biased composition (low complexity); sequence AGPVAPAVVADAEVKAP. Basic and acidic residues predominate over residues 52–65; it reads GYSEQERSEKLRLI.

This sequence belongs to the SyrB family.

The sequence is that of Probable transcriptional regulator syrB3 (syrB3) from Rhizobium meliloti (strain 1021) (Ensifer meliloti).